A 1470-amino-acid chain; its full sequence is Roundabout homolog 2 (1470 aa).

A signal peptide spans 1-21 (MNPLMFTLLLLFGFLCIQIDG). At 22–863 (SRLRQEDFPP…EQITDVVKQP (842 aa)) the chain is on the extracellular side. Ig-like C2-type domains lie at 31-127 (PRIV…ASLE), 133-220 (DDFR…AELT), 225-309 (PTFL…ATLT), 318-413 (PQFV…LEVT), and 422-508 (PIIL…AVLD). A disulfide bridge connects residues Cys-52 and Cys-110. Asn-123 is a glycosylation site (N-linked (GlcNAc...) asparagine). Cystine bridges form between Cys-154/Cys-203, Cys-246/Cys-293, and Cys-339/Cys-395. Residue Asn-430 is glycosylated (N-linked (GlcNAc...) asparagine). Cys-443 and Cys-492 are disulfide-bonded. Fibronectin type-III domains lie at 528 to 622 (PPSK…TQDI), 641 to 739 (VVVR…TEEA), and 743 to 840 (PPQS…IGGR). Asn-756, Asn-786, Asn-793, and Asn-849 each carry an N-linked (GlcNAc...) asparagine glycan. A helical transmembrane segment spans residues 864-884 (AFIAGIGGACWVILMGFSIWL). Residues 885 to 1470 (YWRRKKRKGL…GSNSQGQFTE (586 aa)) lie on the Cytoplasmic side of the membrane. Disordered regions lie at residues 1036–1089 (GFGY…LPGT), 1129–1159 (EDRV…LTPS), 1190–1371 (IQSN…DCPA), and 1383–1470 (DWIN…QFTE). Over residues 1144–1158 (PAISFGQQSTATLTP) the composition is skewed to polar residues. A Phosphothreonine modification is found at Thr-1157. Ser-1159 is subject to Phosphoserine. Over residues 1194–1203 (TPPPQPPAPP) the composition is skewed to pro residues. A compositionally biased stretch (acidic residues) spans 1215 to 1231 (LETDVPDEDADDEEEPL). Polar residues predominate over residues 1243 to 1288 (TPGSSMDNLDSSVTGKAFSSSQRQRPTSPFSTDSNTSAAQNQSQRP). Positions 1315–1325 (DLPPPPDPPPG) are enriched in pro residues. Polar residues predominate over residues 1328-1343 (LRQQIGLSQHSGNVEN). Positions 1413 to 1437 (SKPSFPSPGGHSSSGTSSSKGSTGP) are enriched in low complexity. A compositionally biased stretch (polar residues) spans 1461 to 1470 (GSNSQGQFTE).

The protein belongs to the immunoglobulin superfamily. ROBO family. As to quaternary structure, interacts with SLIT2. Expressed in embryonal spinal cord.

The protein resides in the membrane. Receptor for SLIT2, and probably SLIT1, which are thought to act as molecular guidance cue in cellular migration, including axonal navigation at the ventral midline of the neural tube and projection of axons to different regions during neuronal development. The polypeptide is Roundabout homolog 2 (Robo2) (Mus musculus (Mouse)).